The primary structure comprises 404 residues: Pyrophosphate--fructose 6-phosphate 1-phosphotransferase (404 aa).

A diphosphate-binding site is contributed by Gly-13. Residue Asn-108 participates in Mg(2+) binding. Substrate-binding positions include 136–138 (TID), 180–182 (MGR), Glu-237, and 295–298 (YLQR). Catalysis depends on Asp-138, which acts as the Proton acceptor.

The protein belongs to the phosphofructokinase type A (PFKA) family. PPi-dependent PFK group II subfamily. Clade 'B2' sub-subfamily. Homodimer. Mg(2+) is required as a cofactor.

The protein resides in the cytoplasm. The enzyme catalyses beta-D-fructose 6-phosphate + diphosphate = beta-D-fructose 1,6-bisphosphate + phosphate + H(+). Its pathway is carbohydrate degradation; glycolysis; D-glyceraldehyde 3-phosphate and glycerone phosphate from D-glucose: step 3/4. Its activity is regulated as follows. Non-allosteric. In terms of biological role, catalyzes the phosphorylation of D-fructose 6-phosphate, the first committing step of glycolysis. Uses inorganic phosphate (PPi) as phosphoryl donor instead of ATP like common ATP-dependent phosphofructokinases (ATP-PFKs), which renders the reaction reversible, and can thus function both in glycolysis and gluconeogenesis. Consistently, PPi-PFK can replace the enzymes of both the forward (ATP-PFK) and reverse (fructose-bisphosphatase (FBPase)) reactions. This is Pyrophosphate--fructose 6-phosphate 1-phosphotransferase from Rhodospirillum rubrum (strain ATCC 11170 / ATH 1.1.1 / DSM 467 / LMG 4362 / NCIMB 8255 / S1).